Reading from the N-terminus, the 428-residue chain is GTPase Obg (428 aa).

The region spanning 1-158 is the Obg domain; the sequence is MFVDQVKVYV…RDVILELKVL (158 aa). A disordered region spans residues 118–145; sequence KGGRGGRGNSRFATPANPAPQLSENGEP. The OBG-type G domain occupies 159–329; the sequence is ADVGLVGFPS…LLFEIANQLE (171 aa). GTP contacts are provided by residues 165 to 172, 190 to 194, 212 to 215, 282 to 285, and 310 to 312; these read GFPSVGKS, FTTLV, DLPG, NKMD, and SAI. Residues serine 172 and threonine 192 each contribute to the Mg(2+) site. Residues 350 to 428 enclose the OCT domain; sequence RFDEGDAPFE…LLEFEFEFID (79 aa).

It belongs to the TRAFAC class OBG-HflX-like GTPase superfamily. OBG GTPase family. As to quaternary structure, monomer. The cofactor is Mg(2+).

The protein resides in the cytoplasm. Its function is as follows. An essential GTPase which binds GTP, GDP and possibly (p)ppGpp with moderate affinity, with high nucleotide exchange rates and a fairly low GTP hydrolysis rate. Plays a role in control of the cell cycle, stress response, ribosome biogenesis and in those bacteria that undergo differentiation, in morphogenesis control. This Bacillus pumilus (strain SAFR-032) protein is GTPase Obg.